Consider the following 320-residue polypeptide: Glycerol-3-phosphate dehydrogenase [NAD(P)+] (320 aa).

NADPH contacts are provided by Phe11, Arg30, and Lys102. Residues Lys102, Gly130, and Ser132 each contribute to the sn-glycerol 3-phosphate site. Ala134 is a binding site for NADPH. The sn-glycerol 3-phosphate site is built by Lys185, Asp238, Ser248, Arg249, and Asn250. The Proton acceptor role is filled by Lys185. An NADPH-binding site is contributed by Arg249. Glu270 contributes to the NADPH binding site.

It belongs to the NAD-dependent glycerol-3-phosphate dehydrogenase family.

The protein localises to the cytoplasm. It carries out the reaction sn-glycerol 3-phosphate + NAD(+) = dihydroxyacetone phosphate + NADH + H(+). The enzyme catalyses sn-glycerol 3-phosphate + NADP(+) = dihydroxyacetone phosphate + NADPH + H(+). It participates in membrane lipid metabolism; glycerophospholipid metabolism. Its function is as follows. Catalyzes the reduction of the glycolytic intermediate dihydroxyacetone phosphate (DHAP) to sn-glycerol 3-phosphate (G3P), the key precursor for phospholipid synthesis. This Ruegeria sp. (strain TM1040) (Silicibacter sp.) protein is Glycerol-3-phosphate dehydrogenase [NAD(P)+].